The following is a 1144-amino-acid chain: Adenylate cyclase type 3 (1144 aa).

Over 1–79 the chain is Cytoplasmic; that stretch reads MTEDQGFSDP…FKRQRHETLL (79 aa). The next 5 membrane-spanning stretches (helical) occupy residues 80 to 100, 105 to 125, 139 to 159, 173 to 193, and 226 to 246; these read VLVVFAALFDCYVVVMCAVVF, LAPLMVAGVGLVLDIILFVLC, VPYLLWLLITAQIFSYLGLNF, AFFVFSFFITLPLSLSPIVII, and ILANVFLYLCAIIVGIMSYYM. The Mg(2+) site is built by aspartate 324, isoleucine 325, and aspartate 368. Residues 324–329 and 366–368 contribute to the ATP site; these read DIVGFT and LGD. A helical membrane pass occupies residues 381–401; it reads EDHAVCSILMGLAMVEAISYV. At 402–630 the chain is on the cytoplasmic side; sequence REKTKTGVDM…RYSVEKEKQS (229 aa). Arginine 412 contributes to the ATP binding site. A Glycyl lysine isopeptide (Lys-Gly) (interchain with G-Cter in SUMO3) cross-link involves residue lysine 465. The segment at 504–563 is disordered; the sequence is QNGLNGSALPNGAPASKPSSPALIETKEPNGSAHASGSTSEEAEEQEAQADNPSFPNPRR. The residue at position 523 (serine 523) is a Phosphoserine. Low complexity predominate over residues 534 to 543; it reads GSAHASGSTS. Serine 578 is modified (phosphoserine). Transmembrane regions (helical) follow at residues 631 to 651, 662 to 682, and 706 to 726; these read GAAFSCSCVVLFCTAMVEILI, FVVGEVLLLILTICSMAAIFP, and WAMLAIFILVMANVVDMLSCL. N-linked (GlcNAc...) asparagine glycosylation occurs at asparagine 734. 3 consecutive transmembrane segments (helical) span residues 755–775, 777–797, and 833–853; these read VAVLSLIATIMLVQVSHMVKL, LMLLVTGAVTAINLYAWCPVF, and LPLVPSKYSMTVMMFVMMLSF. The Cytoplasmic segment spans residues 854 to 1144; it reads YYFSRHVEKL…TLPHQVVDNP (291 aa). ATP contacts are provided by residues lysine 975, 1062–1064, and 1069–1073; these read DIW and NVASR. Residue serine 1076 is modified to Phosphoserine; by CaMK2. Residue lysine 1109 participates in ATP binding.

It belongs to the adenylyl cyclase class-4/guanylyl cyclase family. It depends on Mg(2+) as a cofactor. Requires Mn(2+) as cofactor. In terms of processing, N-glycosylated. Sumoylated. Sumoylation is required for targeting ot olfactory cilia. Post-translationally, rapidly phosphorylated after stimulation by odorants or forskolin. Phosphorylation by CaMK2 at Ser-1076 down-regulates enzyme activity. As to expression, detected on cilia on the olfactory epithelium (at protein level). Detected on cilia on the olfactory epithelium.

The protein localises to the cell membrane. It localises to the golgi apparatus. It is found in the cell projection. The protein resides in the cilium. Its subcellular location is the cytoplasm. It catalyses the reaction ATP = 3',5'-cyclic AMP + diphosphate. Its activity is regulated as follows. Specifically activated by the G alpha protein GNAL/G(olf) in signaling cascades triggered by odorant receptors. Activated by forskolin. After forskolin treatment, activity is further increased by calcium/calmodulin. In the absence of forskolin, calcium/calmodulin has little effect on enzyme activity. Functionally, catalyzes the formation of the signaling molecule cAMP in response to G-protein signaling. Participates in signaling cascades triggered by odorant receptors via its function in cAMP biosynthesis: specifically activated by G alpha protein GNAL/G(olf) in olfactory epithelium. Required for the perception of odorants. Required for normal sperm motility and normal male fertility. Plays a role in regulating insulin levels and body fat accumulation in response to a high fat diet. The polypeptide is Adenylate cyclase type 3 (Rattus norvegicus (Rat)).